The primary structure comprises 269 residues: Imidazole glycerol phosphate synthase subunit HisF (269 aa).

Catalysis depends on residues D23 and D142.

The protein belongs to the HisA/HisF family. Heterodimer of HisH and HisF.

Its subcellular location is the cytoplasm. It carries out the reaction 5-[(5-phospho-1-deoxy-D-ribulos-1-ylimino)methylamino]-1-(5-phospho-beta-D-ribosyl)imidazole-4-carboxamide + L-glutamine = D-erythro-1-(imidazol-4-yl)glycerol 3-phosphate + 5-amino-1-(5-phospho-beta-D-ribosyl)imidazole-4-carboxamide + L-glutamate + H(+). The protein operates within amino-acid biosynthesis; L-histidine biosynthesis; L-histidine from 5-phospho-alpha-D-ribose 1-diphosphate: step 5/9. In terms of biological role, IGPS catalyzes the conversion of PRFAR and glutamine to IGP, AICAR and glutamate. The HisF subunit catalyzes the cyclization activity that produces IGP and AICAR from PRFAR using the ammonia provided by the HisH subunit. This chain is Imidazole glycerol phosphate synthase subunit HisF, found in Bordetella pertussis (strain Tohama I / ATCC BAA-589 / NCTC 13251).